The primary structure comprises 164 residues: Protein CURVATURE THYLAKOID 1A, chloroplastic (164 aa).

The N-terminal 62 residues, 1–62, are a transit peptide targeting the chloroplast; that stretch reads MAISVAASSS…LQKVELLKTR (62 aa). The residue at position 63 (Ala63) is an N-acetylalanine. Residues 63–93 are Stromal-facing; sequence ASSEETSSIDTNELITDLKEKWDGLENKSTV. Residues 94–114 traverse the membrane as a helical segment; sequence LIYGGGAIVAVWLSSIVVGAI. At 115 to 116 the chain is on the lumenal side; the sequence is NS. The chain crosses the membrane as a helical span at residues 117–137; the sequence is VPLLPKVMELVGLGYTGWFVY. The Stromal segment spans residues 138–164; it reads RYLLFKSSRKELAEDIESLKKKIAGSE. A coiled-coil region spans residues 140 to 164; sequence LLFKSSRKELAEDIESLKKKIAGSE.

This sequence belongs to the CURT family. In terms of assembly, homo- and heterodimers and trimers.

It is found in the plastid. The protein localises to the chloroplast. It localises to the plastoglobule. Its subcellular location is the membrane. The protein resides in the chloroplast thylakoid membrane. Determines thylakoid architecture by inducing membrane curvature. The polypeptide is Protein CURVATURE THYLAKOID 1A, chloroplastic (CURT1A) (Arabidopsis thaliana (Mouse-ear cress)).